Here is a 100-residue protein sequence, read N- to C-terminus: Succinate dehydrogenase assembly factor 4, mitochondrial (100 aa).

The N-terminal 31 residues, M1 to P31, are a transit peptide targeting the mitochondrion. Positions D24–F100 are disordered. Composition is skewed to basic and acidic residues over residues L36 to E68 and P85 to F100.

It belongs to the SDHAF4 family. As to quaternary structure, interacts with sdh1 in its FAD-bound form.

It localises to the mitochondrion matrix. Plays an essential role in the assembly of succinate dehydrogenase (SDH), an enzyme complex (also referred to as respiratory complex II) that is a component of both the tricarboxylic acid (TCA) cycle and the mitochondrial electron transport chain, and which couples the oxidation of succinate to fumarate with the reduction of ubiquinone (coenzyme Q) to ubiquinol. Binds to the flavoprotein subunit sdh1 in its FAD-bound form, blocking the generation of excess reactive oxygen species (ROS) and facilitating its assembly with the iron-sulfur protein subunit sdh2 into the SDH catalytic dimer. The sequence is that of Succinate dehydrogenase assembly factor 4, mitochondrial from Schizosaccharomyces pombe (strain 972 / ATCC 24843) (Fission yeast).